Reading from the N-terminus, the 458-residue chain is MGALGRVLLWLQLCAMTRAAYKLWVPNTSFDTASNWNQNRTPCAGDAVQFPADKMVSVLVRDSHAISDMLLPLDGELVLASGAALSAAGGDSDPACNPGAPLLFRNPDRFSWLDPHLWSSGTQAPGLFSVDAERVPCSYDDVLFPRDGSFRVALGPGPNPVHVRSVSAVGQTFSRDEDLTAFLASREGRLRFHGSGALRVGSQACTDASGCVCGNAEMLPWICASLLQPLGGRCPQAACQDPLLPQGQCCDLCGAIVSLTHDPTFDLERYRARLLDLFLKQPQYQGLQVAVSKVLRDAHTEIQVVLVETEHATGAAGQLGHALLQDAVAQGSVLGIVSATLRQSGKPMTADSELNQSSSGAGLAGGVAALVLLALLGTVLLLLHRSGRLRWRRHEDAEPVSAGLPLGFRNPIFDAIVFKQQPSVELPDSAQKVDILDIDTKFGCFVNPLFAGEAEAEA.

An N-terminal signal peptide occupies residues Met1 to Ala19. Topologically, residues Ala20–Gly362 are extracellular. Asn27 is a glycosylation site (N-linked (GlcNAc...) asparagine). 6 disulfide bridges follow: Cys43-Cys96, Cys137-Cys213, Cys205-Cys211, Cys223-Cys249, Cys234-Cys250, and Cys239-Cys253. The segment at Ser67–Ala87 is interaction with CUBN. Residues Gln203–Gly254 form the VWFC domain. An N-linked (GlcNAc...) asparagine glycan is attached at Asn355. Residues Leu363–Leu383 traverse the membrane as a helical segment. Over His384–Ala458 the chain is Cytoplasmic.

In terms of assembly, interacts (via extracellular region) with CUBN/cubilin. This gives rise to a huge complex containing one AMN chain and three CUBN chains. In terms of processing, N-glycosylated. A soluble form arises by proteolytic removal of the membrane anchor. In terms of tissue distribution, expressed in polarized epithelial cells which are specialized in resorption or transport, specifically kidney proximal tubules and intestinal epithelium.

The protein resides in the apical cell membrane. The protein localises to the cell membrane. It localises to the endosome membrane. It is found in the membrane. Its subcellular location is the coated pit. Its function is as follows. Membrane-bound component of the endocytic receptor formed by AMN and CUBN. Required for normal CUBN glycosylation and trafficking to the cell surface. The complex formed by AMN and CUBN is required for efficient absorption of vitamin B12. Required for normal CUBN-mediated protein transport in the kidney. This chain is Protein amnionless (Amn), found in Mus musculus (Mouse).